The following is a 151-amino-acid chain: Acidic phospholipase A2 2 (151 aa).

The N-terminal stretch at 1-27 (MYPAHLLVLLAVCVSLLGAASIPARPL) is a signal peptide. 7 disulfides stabilise this stretch: cysteine 38–cysteine 104, cysteine 54–cysteine 151, cysteine 56–cysteine 72, cysteine 71–cysteine 132, cysteine 78–cysteine 125, cysteine 88–cysteine 118, and cysteine 111–cysteine 123. 3 residues coordinate Ca(2+): tyrosine 55, glycine 57, and glycine 59. The active site involves histidine 75. Position 76 (aspartate 76) interacts with Ca(2+). Aspartate 126 is a catalytic residue.

Belongs to the phospholipase A2 family. Group I subfamily. D49 sub-subfamily. It depends on Ca(2+) as a cofactor. In terms of tissue distribution, expressed by the venom gland.

Its subcellular location is the secreted. The catalysed reaction is a 1,2-diacyl-sn-glycero-3-phosphocholine + H2O = a 1-acyl-sn-glycero-3-phosphocholine + a fatty acid + H(+). In terms of biological role, PLA2 catalyzes the calcium-dependent hydrolysis of the 2-acyl groups in 3-sn-phosphoglycerides. The chain is Acidic phospholipase A2 2 from Tropidechis carinatus (Australian rough-scaled snake).